Reading from the N-terminus, the 263-residue chain is Small ribosomal subunit protein eS4 (263 aa).

Residues 42–104 (LPLIIFLRNK…TGENFRLIYD (63 aa)) form the S4 RNA-binding domain. A Glycyl lysine isopeptide (Lys-Gly) (interchain with G-Cter in SUMO2) cross-link involves residue K230. An N6-acetyllysine modification is found at K233.

The protein belongs to the eukaryotic ribosomal protein eS4 family. Component of the small ribosomal subunit. Part of the small subunit (SSU) processome, composed of more than 70 proteins and the RNA chaperone small nucleolar RNA (snoRNA) U3. Identified in a IGF2BP1-dependent mRNP granule complex containing untranslated mRNAs.

It localises to the cytoplasm. The protein localises to the nucleus. The protein resides in the nucleolus. In terms of biological role, component of the small ribosomal subunit. The ribosome is a large ribonucleoprotein complex responsible for the synthesis of proteins in the cell. Part of the small subunit (SSU) processome, first precursor of the small eukaryotic ribosomal subunit. During the assembly of the SSU processome in the nucleolus, many ribosome biogenesis factors, an RNA chaperone and ribosomal proteins associate with the nascent pre-rRNA and work in concert to generate RNA folding, modifications, rearrangements and cleavage as well as targeted degradation of pre-ribosomal RNA by the RNA exosome. The protein is Small ribosomal subunit protein eS4 (RPS4X) of Oryctolagus cuniculus (Rabbit).